The following is a 370-amino-acid chain: Calcium-binding protein 1 (370 aa).

Residues 1 to 198 (MGGGDGAAFK…GRGDSVPAAA (198 aa)) form a disordered region. Glycine 2 carries N-myristoyl glycine lipidation. Glycine 4 carries S-palmitoyl cysteine lipidation. Composition is skewed to low complexity over residues 50–61 (HASAGPAAMSSH), 68–84 (KTSLLKAAAAAASGGSR), and 148–157 (ALPAAASRPS). EF-hand domains are found at residues 225–260 (EEIEELREAFREFDKDKDGYINCRDLGNCMRTMGYM), 279–296 (GHVDFDDFVELMGPKLLA), 302–337 (IGVKELRDAFREFDTNGDGEISTSELREAMRKLLGH), and 339–370 (VGHRDIEEIIRDVDLNGDGRVDFEEFVRMMSR). Ca(2+)-binding residues include aspartate 238, aspartate 240, aspartate 242, tyrosine 244, and aspartate 249. Positions 238, 240, 242, and 244 each coordinate Mg(2+). Ca(2+) contacts are provided by aspartate 315, asparagine 317, aspartate 319, and glutamate 321. A Phosphoserine modification is found at serine 323. The Ca(2+) site is built by glutamate 326, aspartate 352, leucine 353, asparagine 354, aspartate 356, glycine 357, arginine 358, aspartate 360, and glutamate 363.

In terms of assembly, homodimer; when bound to calcium or magnesium. Interacts (via C-terminus) with ITPR1, ITPR2 and ITPR3. This binding is calcium dependent and the interaction correlates with calcium concentration. An additional calcium-independent interaction with the N-terminus of ITPR1 results in a decreased InsP(3) binding to the receptor. Interacts with CACNA1A (via C-terminal CDB motif) in the pre- and postsynaptic membranes. Interacts with CACNA1C (via C-terminal C and IQ motifs). The binding to the C motif is calcium independent whereas the binding to IQ requires the presence of calcium and is mutually exclusive with calmodulin binding. Interacts with CACNA1D. Interacts with TRPC5 (via C-terminus). Interacts (via EF-hands 1 and 2) at microtubules with MAP1LC3B. Interacts with MYO1C. Interacts (via EF-hands 1 and 2) with NSMF (via the central NLS-containing motif region), the interaction occurs in a calcium dependent manner after synaptic NMDA receptor stimulation and prevents nuclear import of NSMF. Interacts with SPACA9. In terms of processing, phosphorylated. The phosphorylation regulates the activity. As to expression, retina and brain. Somatodendritic compartment of neurons. Calbrain was found exclusively in brain where it is abundant in the hippocampus, habenular area in the epithalamus and in the cerebellum.

The protein localises to the cytoplasm. It is found in the cytoskeleton. The protein resides in the perinuclear region. Its subcellular location is the cell membrane. It localises to the golgi apparatus. The protein localises to the postsynaptic density. It is found in the cell cortex. In terms of biological role, modulates calcium-dependent activity of inositol 1,4,5-triphosphate receptors (ITPRs). Inhibits agonist-induced intracellular calcium signaling. Enhances inactivation and does not support calcium-dependent facilitation of voltage-dependent P/Q-type calcium channels. Causes calcium-dependent facilitation and inhibits inactivation of L-type calcium channels by binding to the same sites as calmodulin in the C-terminal domain of CACNA1C, but has an opposite effect on channel function. Suppresses the calcium-dependent inactivation of CACNA1D. Inhibits TRPC5 channels. Prevents NMDA receptor-induced cellular degeneration. Required for the normal transfer of light signals through the retina. The sequence is that of Calcium-binding protein 1 (CABP1) from Homo sapiens (Human).